The sequence spans 720 residues: Phenylalanine--tRNA ligase beta subunit, chloroplastic (720 aa).

In terms of domain architecture, B5 spans 319 to 404; it reads NSTLNIDISL…RVYGYNQFQS (86 aa). 4 residues coordinate Mg(2+): Asp382, Asp388, Glu391, and Glu392. Positions 626–719 constitute an FDX-ACB domain; it reads SKYPCITRDL…IIKKLNLEIR (94 aa).

Belongs to the phenylalanyl-tRNA synthetase beta subunit family. Type 1 subfamily. As to quaternary structure, tetramer of two alpha and two beta subunits. It depends on Mg(2+) as a cofactor.

It localises to the plastid. The protein resides in the chloroplast. The enzyme catalyses tRNA(Phe) + L-phenylalanine + ATP = L-phenylalanyl-tRNA(Phe) + AMP + diphosphate + H(+). This chain is Phenylalanine--tRNA ligase beta subunit, chloroplastic (pheT), found in Porphyra purpurea (Red seaweed).